Reading from the N-terminus, the 932-residue chain is DNA mismatch repair protein MutS (932 aa).

Glycine 620–serine 627 provides a ligand contact to ATP.

Belongs to the DNA mismatch repair MutS family.

In terms of biological role, this protein is involved in the repair of mismatches in DNA. It is possible that it carries out the mismatch recognition step. This protein has a weak ATPase activity. This chain is DNA mismatch repair protein MutS, found in Lachnoclostridium phytofermentans (strain ATCC 700394 / DSM 18823 / ISDg) (Clostridium phytofermentans).